The primary structure comprises 599 residues: Laccase-2 (599 aa).

Positions 1-19 are cleaved as a signal peptide; sequence MARSTTSLFALSLVASAFA. Plastocyanin-like domains are found at residues 21-145 and 157-307; these read VVDY…IVIY and VDDE…LVYE. Positions 82, 84, 127, and 129 each coordinate Cu cation. C103 and C588 are joined by a disulfide. N-linked (GlcNAc...) asparagine glycans are attached at residues N207, N208, N231, N397, and N443. The 118-residue stretch at 450–567 folds into the Plastocyanin-like 3 domain; sequence DVPTLLKILT…EGFAMVFAEA (118 aa). Residues H497, H500, H502, H549, C550, H551, and H555 each coordinate Cu cation.

The protein belongs to the multicopper oxidase family. In terms of assembly, homodimer. The cofactor is Cu cation. In mycelia, at a lower level than LCC4.

The protein resides in the secreted. It carries out the reaction 4 hydroquinone + O2 = 4 benzosemiquinone + 2 H2O. Functionally, lignin degradation and detoxification of lignin-derived products. This Thanatephorus cucumeris (Black scurf of potato) protein is Laccase-2 (LCC2).